Consider the following 421-residue polypeptide: 5-methylthioadenosine/S-adenosylhomocysteine deaminase (421 aa).

Residues His-60 and His-62 each coordinate Zn(2+). 2 residues coordinate substrate: Glu-89 and His-181. His-208 contacts Zn(2+). Glu-211 and Asp-296 together coordinate substrate. Asp-296 contacts Zn(2+).

Belongs to the metallo-dependent hydrolases superfamily. MTA/SAH deaminase family. It depends on Zn(2+) as a cofactor.

The enzyme catalyses S-adenosyl-L-homocysteine + H2O + H(+) = S-inosyl-L-homocysteine + NH4(+). The catalysed reaction is S-methyl-5'-thioadenosine + H2O + H(+) = S-methyl-5'-thioinosine + NH4(+). Its function is as follows. Catalyzes the deamination of 5-methylthioadenosine and S-adenosyl-L-homocysteine into 5-methylthioinosine and S-inosyl-L-homocysteine, respectively. Is also able to deaminate adenosine. This chain is 5-methylthioadenosine/S-adenosylhomocysteine deaminase, found in Pyrococcus horikoshii (strain ATCC 700860 / DSM 12428 / JCM 9974 / NBRC 100139 / OT-3).